A 357-amino-acid polypeptide reads, in one-letter code: Protein RecA (357 aa).

Residue 67–74 (GPESSGKT) coordinates ATP. The disordered stretch occupies residues 335–357 (LSSSASDDENSEGNVDFETGEVF).

It belongs to the RecA family.

The protein resides in the cytoplasm. Functionally, can catalyze the hydrolysis of ATP in the presence of single-stranded DNA, the ATP-dependent uptake of single-stranded DNA by duplex DNA, and the ATP-dependent hybridization of homologous single-stranded DNAs. It interacts with LexA causing its activation and leading to its autocatalytic cleavage. The sequence is that of Protein RecA from Shewanella sp. (strain MR-4).